The sequence spans 161 residues: Putative pre-16S rRNA nuclease (161 aa).

Positions alanine 141–alanine 161 are disordered.

This sequence belongs to the YqgF nuclease family.

The protein localises to the cytoplasm. Its function is as follows. Could be a nuclease involved in processing of the 5'-end of pre-16S rRNA. This Clavibacter michiganensis subsp. michiganensis (strain NCPPB 382) protein is Putative pre-16S rRNA nuclease.